A 123-amino-acid polypeptide reads, in one-letter code: MTPTPLTPYLPLAVVLLLAGGMAMLIPQITTRLGPRRPSAIKATSFEAGSESSGPARQRFAVKFYVVALLFIVFDVEAVFLYPWAVNFQALGWFGYVEMLVFAVTLVVGLIYIWKKGALDWES.

3 helical membrane passes run 6-26 (LTPYLPLAVVLLLAGGMAMLI), 66-86 (VVALLFIVFDVEAVFLYPWAV), and 93-113 (WFGYVEMLVFAVTLVVGLIYI).

This sequence belongs to the complex I subunit 3 family. As to quaternary structure, NDH-1 is composed of 14 different subunits. Subunits NuoA, H, J, K, L, M, N constitute the membrane sector of the complex.

The protein resides in the cell inner membrane. It carries out the reaction a quinone + NADH + 5 H(+)(in) = a quinol + NAD(+) + 4 H(+)(out). Functionally, NDH-1 shuttles electrons from NADH, via FMN and iron-sulfur (Fe-S) centers, to quinones in the respiratory chain. The immediate electron acceptor for the enzyme in this species is believed to be ubiquinone. Couples the redox reaction to proton translocation (for every two electrons transferred, four hydrogen ions are translocated across the cytoplasmic membrane), and thus conserves the redox energy in a proton gradient. The polypeptide is NADH-quinone oxidoreductase subunit A (Myxococcus xanthus (strain DK1622)).